The following is an 83-amino-acid chain: Exodeoxyribonuclease 7 small subunit (83 aa).

This sequence belongs to the XseB family. In terms of assembly, heterooligomer composed of large and small subunits.

It localises to the cytoplasm. The catalysed reaction is Exonucleolytic cleavage in either 5'- to 3'- or 3'- to 5'-direction to yield nucleoside 5'-phosphates.. Its function is as follows. Bidirectionally degrades single-stranded DNA into large acid-insoluble oligonucleotides, which are then degraded further into small acid-soluble oligonucleotides. In Aeromonas salmonicida (strain A449), this protein is Exodeoxyribonuclease 7 small subunit.